The chain runs to 291 residues: Ribosomal RNA small subunit methyltransferase A (291 aa).

S-adenosyl-L-methionine-binding residues include histidine 37, leucine 39, glycine 64, glutamate 85, aspartate 110, and asparagine 131.

It belongs to the class I-like SAM-binding methyltransferase superfamily. rRNA adenine N(6)-methyltransferase family. RsmA subfamily.

Its subcellular location is the cytoplasm. It carries out the reaction adenosine(1518)/adenosine(1519) in 16S rRNA + 4 S-adenosyl-L-methionine = N(6)-dimethyladenosine(1518)/N(6)-dimethyladenosine(1519) in 16S rRNA + 4 S-adenosyl-L-homocysteine + 4 H(+). Functionally, specifically dimethylates two adjacent adenosines (A1518 and A1519) in the loop of a conserved hairpin near the 3'-end of 16S rRNA in the 30S particle. May play a critical role in biogenesis of 30S subunits. This Dehalococcoides mccartyi (strain ATCC BAA-2100 / JCM 16839 / KCTC 5957 / BAV1) protein is Ribosomal RNA small subunit methyltransferase A.